The following is a 793-amino-acid chain: PC3-like endoprotease variant A (793 aa).

Residues 1–29 form the signal peptide; it reads MNYRGIYRRRYVFVLLLLVAVVNISYGWT. The propeptide occupies 30–152; sequence VLKNKDYKRR…QQKILERVKR (123 aa). N-linked (GlcNAc...) asparagine glycans are attached at residues Asn-62 and Asn-190. In terms of domain architecture, Peptidase S8 spans 164-486; the sequence is MWYLLNTGQA…FGRLDANAMV (323 aa). Catalysis depends on charge relay system residues Asp-202 and His-242. 2 disulfides stabilise this stretch: Cys-259–Cys-411 and Cys-351–Cys-381. The active-site Charge relay system is the Ser-419. The P/Homo B domain maps to 495–638; the sequence is LPAQRKCTAA…EERVIDTQTK (144 aa). Cysteines 501 and 527 form a disulfide.

Belongs to the peptidase S8 family. Furin subfamily. Predominantly in the body column.

In terms of biological role, probably involved in the processing of hormone and other protein precursors at sites comprised of pairs of basic amino acid residues. This chain is PC3-like endoprotease variant A, found in Hydra vulgaris (Hydra).